A 236-amino-acid chain; its full sequence is Purine nucleoside phosphorylase DeoD-type (236 aa).

An a purine D-ribonucleoside-binding site is contributed by H5. Residues G21, R25, R44, and 88-91 (RVGS) contribute to the phosphate site. Residues 180–182 (DME) and 204–205 (SD) each bind a purine D-ribonucleoside. The active-site Proton donor is the D205.

It belongs to the PNP/UDP phosphorylase family. In terms of assembly, homohexamer; trimer of homodimers.

It carries out the reaction a purine D-ribonucleoside + phosphate = a purine nucleobase + alpha-D-ribose 1-phosphate. It catalyses the reaction a purine 2'-deoxy-D-ribonucleoside + phosphate = a purine nucleobase + 2-deoxy-alpha-D-ribose 1-phosphate. Catalyzes the reversible phosphorolytic breakdown of the N-glycosidic bond in the beta-(deoxy)ribonucleoside molecules, with the formation of the corresponding free purine bases and pentose-1-phosphate. The protein is Purine nucleoside phosphorylase DeoD-type of Aliivibrio salmonicida (strain LFI1238) (Vibrio salmonicida (strain LFI1238)).